The chain runs to 318 residues: 2-keto-3-deoxygluconate permease (318 aa).

The next 10 membrane-spanning stretches (helical) occupy residues 10–30, 42–62, 82–102, 109–129, 139–159, 163–183, 201–221, 224–244, 257–277, and 288–308; these read LPGG…TLWP, GLIS…GATI, IAVA…GGIP, LSVL…YAAL, AGAV…LILG, LATF…LGFA, TLVP…TIVH, ASGV…LLLA, VAAS…AGMA, and TALV…LTAL.

This sequence belongs to the KdgT transporter family.

The protein resides in the cell inner membrane. The catalysed reaction is 2-dehydro-3-deoxy-D-gluconate(in) + H(+)(in) = 2-dehydro-3-deoxy-D-gluconate(out) + H(+)(out). In terms of biological role, catalyzes the proton-dependent uptake of 2-keto-3-deoxygluconate (KDG) into the cell. The chain is 2-keto-3-deoxygluconate permease from Xanthomonas oryzae pv. oryzae (strain MAFF 311018).